We begin with the raw amino-acid sequence, 96 residues long: Co-chaperonin GroES (96 aa).

It belongs to the GroES chaperonin family. Heptamer of 7 subunits arranged in a ring. Interacts with the chaperonin GroEL.

The protein localises to the cytoplasm. Functionally, together with the chaperonin GroEL, plays an essential role in assisting protein folding. The GroEL-GroES system forms a nano-cage that allows encapsulation of the non-native substrate proteins and provides a physical environment optimized to promote and accelerate protein folding. GroES binds to the apical surface of the GroEL ring, thereby capping the opening of the GroEL channel. The sequence is that of Co-chaperonin GroES from Haemophilus influenzae (strain 86-028NP).